The sequence spans 572 residues: Glutamate--tRNA ligase (572 aa).

A 'HIGH' region motif is present at residues 107–117 (PNPDGAFHLGN).

It belongs to the class-I aminoacyl-tRNA synthetase family. Glutamate--tRNA ligase type 2 subfamily.

It localises to the cytoplasm. The catalysed reaction is tRNA(Glu) + L-glutamate + ATP = L-glutamyl-tRNA(Glu) + AMP + diphosphate. In terms of biological role, catalyzes the attachment of glutamate to tRNA(Glu) in a two-step reaction: glutamate is first activated by ATP to form Glu-AMP and then transferred to the acceptor end of tRNA(Glu). This is Glutamate--tRNA ligase from Pyrococcus furiosus (strain ATCC 43587 / DSM 3638 / JCM 8422 / Vc1).